We begin with the raw amino-acid sequence, 111 residues long: BET1-like protein (111 aa).

Residues 1 to 86 (MADWTRAQSS…MARSGRDNRK (86 aa)) lie on the Cytoplasmic side of the membrane. Phosphoserine is present on residues Ser9 and Ser37. The region spanning 15-77 (DILDRENKRM…TGSVKRFSTM (63 aa)) is the t-SNARE coiled-coil homology domain. The helical; Anchor for type IV membrane protein transmembrane segment at 87-107 (LLCGMAVVLIVAFFILSYLLS) threads the bilayer. Over 108 to 111 (RTRT) the chain is Lumenal.

As to quaternary structure, component of a SNARE complex consisting of STX5, YKT6, GOSR1 and BET1L. Interacts with STX5.

The protein resides in the golgi apparatus membrane. It is found in the golgi apparatus. It localises to the trans-Golgi network membrane. Functionally, vesicle SNARE required for targeting and fusion of retrograde transport vesicles with the Golgi complex. Required for the integrity of the Golgi complex. The polypeptide is BET1-like protein (Mus musculus (Mouse)).